We begin with the raw amino-acid sequence, 267 residues long: Small ribosomal subunit protein uS3 (267 aa).

Positions 43-111 constitute a KH type-2 domain; it reads IRKEMSKDLE…QVQLNIFEVK (69 aa). Residues 216-267 are disordered; sequence FEEQQAQQNNRPGRRGGDRRPRRGNRSAAPQAAEAPKAEAPAEAAPAAETKE. The segment covering 241–267 has biased composition (low complexity); the sequence is RSAAPQAAEAPKAEAPAEAAPAAETKE.

It belongs to the universal ribosomal protein uS3 family. As to quaternary structure, part of the 30S ribosomal subunit. Forms a tight complex with proteins S10 and S14.

Its function is as follows. Binds the lower part of the 30S subunit head. Binds mRNA in the 70S ribosome, positioning it for translation. This is Small ribosomal subunit protein uS3 from Bifidobacterium longum subsp. infantis (strain ATCC 15697 / DSM 20088 / JCM 1222 / NCTC 11817 / S12).